The primary structure comprises 138 residues: Ribulose bisphosphate carboxylase small subunit (138 aa).

The protein belongs to the RuBisCO small chain family. Heterohexadecamer of 8 large and 8 small subunits.

The protein localises to the plastid. It is found in the chloroplast. In terms of biological role, ruBisCO catalyzes two reactions: the carboxylation of D-ribulose 1,5-bisphosphate, the primary event in carbon dioxide fixation, as well as the oxidative fragmentation of the pentose substrate in the photorespiration process. Both reactions occur simultaneously and in competition at the same active site. Although the small subunit is not catalytic it is essential for maximal activity. This is Ribulose bisphosphate carboxylase small subunit from Pyropia katadae (Red alga).